The primary structure comprises 32 residues: Cytochrome b6-f complex subunit 7 (32 aa).

A helical membrane pass occupies residues 5–25; it reads IFGTAAIFWVLIPIGLVGGAL.

This sequence belongs to the PetM family. In terms of assembly, the 4 large subunits of the cytochrome b6-f complex are cytochrome b6, subunit IV (17 kDa polypeptide, PetD), cytochrome f and the Rieske protein, while the 4 small subunits are PetG, PetL, PetM and PetN. The complex functions as a dimer.

It is found in the cellular thylakoid membrane. Functionally, component of the cytochrome b6-f complex, which mediates electron transfer between photosystem II (PSII) and photosystem I (PSI), cyclic electron flow around PSI, and state transitions. The sequence is that of Cytochrome b6-f complex subunit 7 from Synechococcus sp. (strain CC9902).